Reading from the N-terminus, the 186-residue chain is NADH-quinone oxidoreductase subunit C (186 aa).

The segment at 166 to 186 is disordered; sequence DSLTPWKGVGRPSDPFDGRKE.

This sequence belongs to the complex I 30 kDa subunit family. NDH-1 is composed of 14 different subunits. Subunits NuoB, C, D, E, F, and G constitute the peripheral sector of the complex.

The protein localises to the cell inner membrane. It carries out the reaction a quinone + NADH + 5 H(+)(in) = a quinol + NAD(+) + 4 H(+)(out). Functionally, NDH-1 shuttles electrons from NADH, via FMN and iron-sulfur (Fe-S) centers, to quinones in the respiratory chain. The immediate electron acceptor for the enzyme in this species is believed to be ubiquinone. Couples the redox reaction to proton translocation (for every two electrons transferred, four hydrogen ions are translocated across the cytoplasmic membrane), and thus conserves the redox energy in a proton gradient. This is NADH-quinone oxidoreductase subunit C from Neorickettsia sennetsu (strain ATCC VR-367 / Miyayama) (Ehrlichia sennetsu).